The following is a 493-amino-acid chain: 5'-3' exonuclease PLD3 (493 aa).

The Cytoplasmic segment spans residues M1 to A37. A helical; Signal-anchor for type II membrane protein membrane pass occupies residues L38 to F58. At P59–F493 the chain is on the lumenal side. The N-linked (GlcNAc...) asparagine glycan is linked to N99. Residues T197 to S224 enclose the PLD phosphodiesterase 1 domain. Residues H202, K204, and D209 contribute to the active site. 5 N-linked (GlcNAc...) asparagine glycosylation sites follow: N237, N259, N269, N285, and N388. The PLD phosphodiesterase 2 domain occupies Y412–Y438. Residues H417, K419, and D424 contribute to the active site. 3 N-linked (GlcNAc...) asparagine glycosylation sites follow: N433, N450, and N476.

The protein belongs to the phospholipase D family. N-glycosylated. In terms of processing, proteolytically processed to a soluble form that is stable within endosomes and lysosomes. During transport through the secretory pathway becomes proteolysed by cysteine proteases, thereby releasing a stable soluble lysosomal lumenal polypeptide, whereas the transmembrane-bound fragment is rapidly degraded. Its transport route to lysosomes involves ubiquitination and the ESCRT complex. Post-translationally, ubiquitinated. Ubiquitination mediates sorting into lysosomes.

The protein localises to the endoplasmic reticulum membrane. Its subcellular location is the lysosome lumen. It localises to the early endosome membrane. It is found in the late endosome membrane. The protein resides in the golgi apparatus membrane. The protein localises to the endosome membrane. The enzyme catalyses Exonucleolytic cleavage in the 5'- to 3'-direction to yield nucleoside 3'-phosphates.. 5'-&gt;3' DNA exonuclease which digests single-stranded DNA (ssDNA). Regulates inflammatory cytokine responses via the degradation of nucleic acids, by reducing the concentration of ssDNA able to stimulate TLR9, a nucleotide-sensing receptor in collaboration with PLD4. May be important in myotube formation. Plays a role in lysosomal homeostasis. Involved in the regulation of endosomal protein sorting. The protein is 5'-3' exonuclease PLD3 (pld3) of Xenopus laevis (African clawed frog).